Reading from the N-terminus, the 237-residue chain is 1-(5-phosphoribosyl)-5-[(5-phosphoribosylamino)methylideneamino] imidazole-4-carboxamide isomerase (237 aa).

D8 serves as the catalytic Proton acceptor. The Proton donor role is filled by D129.

This sequence belongs to the HisA/HisF family.

The protein resides in the cytoplasm. It catalyses the reaction 1-(5-phospho-beta-D-ribosyl)-5-[(5-phospho-beta-D-ribosylamino)methylideneamino]imidazole-4-carboxamide = 5-[(5-phospho-1-deoxy-D-ribulos-1-ylimino)methylamino]-1-(5-phospho-beta-D-ribosyl)imidazole-4-carboxamide. Its pathway is amino-acid biosynthesis; L-histidine biosynthesis; L-histidine from 5-phospho-alpha-D-ribose 1-diphosphate: step 4/9. The chain is 1-(5-phosphoribosyl)-5-[(5-phosphoribosylamino)methylideneamino] imidazole-4-carboxamide isomerase from Roseiflexus castenholzii (strain DSM 13941 / HLO8).